The following is a 216-amino-acid chain: MOB kinase activator-like 2A (216 aa).

Cysteine 81, cysteine 86, histidine 162, and histidine 167 together coordinate Zn(2+).

It belongs to the MOB1/phocein family.

It localises to the nucleus. The polypeptide is MOB kinase activator-like 2A (Arabidopsis thaliana (Mouse-ear cress)).